The primary structure comprises 364 residues: Long-wave-sensitive opsin 1 (364 aa).

The Extracellular portion of the chain corresponds to 1-52 (MTQRWGPQRLAGGQPHAGLEDSTRASIFTYTNSNATRGPFEGPNYHIAPRWV). An O-linked (GlcNAc) serine glycan is attached at Ser-22. Residue Asn-34 is glycosylated (N-linked (GlcNAc...) asparagine). A helical membrane pass occupies residues 53 to 77 (YHVTSAWMIFVVIASVFTNGLVLAA). Over 78 to 89 (TMKFKKLRHPLN) the chain is Cytoplasmic. A helical transmembrane segment spans residues 90–115 (WILVNLAVADLAETIIASTISVVNQI). Residues 116-129 (YGYFVLGHPMCVLE) are Extracellular-facing. Cys-126 and Cys-203 are disulfide-bonded. Residues 130 to 149 (GYTVSLCGITGLWSLAIISW) traverse the membrane as a helical segment. At 150–168 (ERWLVVCKPFGNVRFDAKL) the chain is on the cytoplasmic side. A helical membrane pass occupies residues 169–192 (AIAGIAFSWIWAAVWTAPPIFGWS). Topologically, residues 193-218 (RYWPHGLKTSCGPDVFSGSSYPGVQS) are extracellular. The helical transmembrane segment at 219-246 (YMIVLMITCCIIPLSVIVLCYLQVWLAI) threads the bilayer. Residues 247–268 (RAVAKQQKESESTQKAEKEVTR) lie on the Cytoplasmic side of the membrane. Residues 269-292 (MVMVMIFAYCVCWGPYTFFACFAA) form a helical membrane-spanning segment. The Extracellular portion of the chain corresponds to 293 to 300 (AHPGYAFH). The helical transmembrane segment at 301 to 325 (PLVAALPAYFAKSATIYNPIIYVFM) threads the bilayer. Lys-312 carries the post-translational modification N6-(retinylidene)lysine. Residues 326–364 (NRQFRNCIMQLFGKKVDDGSELSSASRTEASSVSSVSPA) lie on the Cytoplasmic side of the membrane.

Belongs to the G-protein coupled receptor 1 family. Opsin subfamily. Phosphorylated on some or all of the serine and threonine residues present in the C-terminal region. In terms of tissue distribution, the three color pigments are found in the cone photoreceptor cells. Expressed in retina.

The protein localises to the membrane. Its function is as follows. Visual pigments are the light-absorbing molecules that mediate vision. They consist of an apoprotein, opsin, covalently linked to cis-retinal. The sequence is that of Long-wave-sensitive opsin 1 (OPN1LW) from Felis catus (Cat).